A 120-amino-acid polypeptide reads, in one-letter code: Basic phospholipase A2 Cc2-PLA2 (120 aa).

7 disulfide bridges follow: Cys-26–Cys-113, Cys-28–Cys-44, Cys-43–Cys-95, Cys-49–Cys-120, Cys-50–Cys-88, Cys-57–Cys-81, and Cys-75–Cys-86. Tyr-27, Gly-29, and Gly-31 together coordinate Ca(2+). His-47 is a catalytic residue. Residue Asp-48 coordinates Ca(2+). The active site involves Asp-89.

The protein belongs to the phospholipase A2 family. Group II subfamily. D49 sub-subfamily. Monomer. Ca(2+) serves as cofactor. As to expression, expressed by the venom gland.

The protein resides in the secreted. It carries out the reaction a 1,2-diacyl-sn-glycero-3-phosphocholine + H2O = a 1-acyl-sn-glycero-3-phosphocholine + a fatty acid + H(+). Its function is as follows. Basic phospholipase A2 that inhibits ADP-, thrombin- and arachidonic acid-induced platelet aggregation. It also exhibits anticoagulant effects upon human plasma in vitro. It induces a high hemolytic activity reaching its maximum after 24 hours. It induces a marked elevation of plasmatic levels of interleukin-6 and -10, eosinophil peroxidase and complement lytic activities and it also provokes a drastic increase of lymphocytes, monocytes and neutrophils in peripheral blood accompanied by a rapid intense migration of neutrophils to the peritoneal cavity. PLA2 catalyzes the calcium-dependent hydrolysis of the 2-acyl groups in 3-sn-phosphoglycerides. The protein is Basic phospholipase A2 Cc2-PLA2 of Cerastes cerastes (Horned desert viper).